Reading from the N-terminus, the 168-residue chain is uncharacterized protein (168 aa).

A run of 5 helical transmembrane segments spans residues Tyr-15 to Leu-33, Leu-41 to Leu-57, Trp-73 to Leu-93, Val-108 to Asn-128, and Asn-129 to Ile-149.

The protein resides in the cell membrane. This is an uncharacterized protein from Haemophilus influenzae (strain ATCC 51907 / DSM 11121 / KW20 / Rd).